A 419-amino-acid chain; its full sequence is Serine--tRNA ligase (419 aa).

L-serine is bound at residue T226–E228. ATP-binding positions include R257 to E259 and V273. E280 serves as a coordination point for L-serine. E344–S347 provides a ligand contact to ATP. T379 contacts L-serine.

It belongs to the class-II aminoacyl-tRNA synthetase family. Type-1 seryl-tRNA synthetase subfamily. In terms of assembly, homodimer. The tRNA molecule binds across the dimer.

The protein localises to the cytoplasm. The enzyme catalyses tRNA(Ser) + L-serine + ATP = L-seryl-tRNA(Ser) + AMP + diphosphate + H(+). It carries out the reaction tRNA(Sec) + L-serine + ATP = L-seryl-tRNA(Sec) + AMP + diphosphate + H(+). Its pathway is aminoacyl-tRNA biosynthesis; selenocysteinyl-tRNA(Sec) biosynthesis; L-seryl-tRNA(Sec) from L-serine and tRNA(Sec): step 1/1. In terms of biological role, catalyzes the attachment of serine to tRNA(Ser). Is also able to aminoacylate tRNA(Sec) with serine, to form the misacylated tRNA L-seryl-tRNA(Sec), which will be further converted into selenocysteinyl-tRNA(Sec). The protein is Serine--tRNA ligase of Mycobacterium marinum (strain ATCC BAA-535 / M).